The chain runs to 446 residues: Argininosuccinate synthase (446 aa).

Residues 17–25 (AFSGGLDTS) and Ala-43 contribute to the ATP site. L-citrulline is bound at residue Tyr-99. Residues Gly-129 and Thr-131 each coordinate ATP. Thr-131, Asn-135, and Asp-136 together coordinate L-aspartate. An L-citrulline-binding site is contributed by Asn-135. Asp-136 lines the ATP pocket. Residues Arg-139 and Ser-192 each coordinate L-citrulline. Asp-194 is a binding site for ATP. L-citrulline contacts are provided by Thr-201, Glu-203, and Glu-280.

This sequence belongs to the argininosuccinate synthase family. Type 2 subfamily. As to quaternary structure, homotetramer.

It localises to the cytoplasm. It catalyses the reaction L-citrulline + L-aspartate + ATP = 2-(N(omega)-L-arginino)succinate + AMP + diphosphate + H(+). It participates in amino-acid biosynthesis; L-arginine biosynthesis; L-arginine from L-ornithine and carbamoyl phosphate: step 2/3. The protein is Argininosuccinate synthase of Methylibium petroleiphilum (strain ATCC BAA-1232 / LMG 22953 / PM1).